Here is a 349-residue protein sequence, read N- to C-terminus: MSDFQREQRKNEHVEIAMAQSDAMHSDFDKMRFVHHSIPSINVNDIDLTSQTPDLTMAYPVYINAMTGGSEWTKNINEKLAVVARETGLAMAVGSTHAALRNPRMAETFTIARKMNPEGMIFSNVGADVPVEKALEAVELLEAQALQIHVNSPQELVMPEGNREFVTWLDNIASIVSRVSVPVIIKEVGFGMSKELMHDLQQIGVKYVDVSGKGGTNFVDIENERRANKDMDYLSSWGQSTVESLLETTAYQSEISVFASGGLRTPLDAIKSLALGAKATGMSRPFLNQVENNGIAHTVAYVESFIEHMKSIMTMLDAKNIDDLTQKQIVFSPEILSWIEQRNLNIHRG.

9–10 (RK) contacts substrate. FMN contacts are provided by residues 65-67 (AMT), serine 95, and asparagine 124. 95–97 (STH) contributes to the substrate binding site. A substrate-binding site is contributed by glutamine 154. Residue glutamate 155 participates in Mg(2+) binding. Residues lysine 186, serine 211, threonine 216, 262–264 (GLR), and 283–284 (SR) each bind FMN.

This sequence belongs to the IPP isomerase type 2 family. Homooctamer. Dimer of tetramers. FMN serves as cofactor. The cofactor is NADPH. Requires Mg(2+) as cofactor.

It localises to the cytoplasm. It catalyses the reaction isopentenyl diphosphate = dimethylallyl diphosphate. In terms of biological role, involved in the biosynthesis of isoprenoids. Catalyzes the 1,3-allylic rearrangement of the homoallylic substrate isopentenyl (IPP) to its allylic isomer, dimethylallyl diphosphate (DMAPP). The protein is Isopentenyl-diphosphate delta-isomerase of Staphylococcus aureus (strain USA300 / TCH1516).